The primary structure comprises 583 residues: Probable phosphoglucomutase, cytoplasmic 1 (583 aa).

Alpha-D-glucose 1,6-bisphosphate contacts are provided by Arg-24 and Ser-123. Ser-123 acts as the Phosphoserine intermediate in catalysis. The Mg(2+) site is built by Ser-123, Asp-299, Asp-301, and Asp-303. Ser-123 carries the post-translational modification Phosphoserine. Residues Asp-303, Arg-304, Thr-367, Glu-386, Ser-388, and Lys-399 each contribute to the alpha-D-glucose 1,6-bisphosphate site.

The protein belongs to the phosphohexose mutase family. In terms of assembly, monomer. Requires Mg(2+) as cofactor.

Its subcellular location is the cytoplasm. The catalysed reaction is alpha-D-glucose 1-phosphate = alpha-D-glucose 6-phosphate. It catalyses the reaction O-phospho-L-seryl-[protein] + alpha-D-glucose 1-phosphate = alpha-D-glucose 1,6-bisphosphate + L-seryl-[protein]. The enzyme catalyses alpha-D-glucose 1,6-bisphosphate + L-seryl-[protein] = O-phospho-L-seryl-[protein] + alpha-D-glucose 6-phosphate. Its function is as follows. Catalyzes the reversible isomerization of alpha-D-glucose 1-phosphate to alpha-D-glucose 6-phosphate. The mechanism proceeds via the intermediate compound alpha-D-glucose 1,6-bisphosphate. This enzyme participates in both the breakdown and synthesis of glucose. The sequence is that of Probable phosphoglucomutase, cytoplasmic 1 from Arabidopsis thaliana (Mouse-ear cress).